The primary structure comprises 261 residues: Phosphatidylglycerol--prolipoprotein diacylglyceryl transferase (261 aa).

4 helical membrane passes run 13 to 33, 50 to 70, 86 to 106, and 112 to 132; these read LQIR…YWYI, VISW…ILFY, WNGG…MYIF, and IDVL…IFFG. An a 1,2-diacyl-sn-glycero-3-phospho-(1'-sn-glycerol)-binding site is contributed by Arg-133. A run of 3 helical transmembrane segments spans residues 169 to 189, 197 to 217, and 232 to 252; these read LYEA…LFFF, GMLS…IEFV, and ITMG…FIKL.

Belongs to the Lgt family.

It localises to the cell inner membrane. The catalysed reaction is L-cysteinyl-[prolipoprotein] + a 1,2-diacyl-sn-glycero-3-phospho-(1'-sn-glycerol) = an S-1,2-diacyl-sn-glyceryl-L-cysteinyl-[prolipoprotein] + sn-glycerol 1-phosphate + H(+). It participates in protein modification; lipoprotein biosynthesis (diacylglyceryl transfer). Its function is as follows. Catalyzes the transfer of the diacylglyceryl group from phosphatidylglycerol to the sulfhydryl group of the N-terminal cysteine of a prolipoprotein, the first step in the formation of mature lipoproteins. The protein is Phosphatidylglycerol--prolipoprotein diacylglyceryl transferase of Ehrlichia canis (strain Jake).